The sequence spans 203 residues: MGSYETELNLRATELRLGLPGSDEPQEKRPCSGSVVRSSNKRSSPELEESRCKSNINSDSSDSTTTSDHNEDSVQPAKVQVVGWPPIRSFRKNSLQQKKVEQGDGTGMYLKVSMAGAPYLRKIDLKVYKSYPELLKALQNLFKCTFGEYSEREGYNGSEYAPTYEDKDGDWMLVGDVPWNMFVSSCKRLRIIKGSEAKGLGCL.

The short motif at 15–19 (LRLGL) is the EAR-like (transcriptional repression) element. The tract at residues 15–77 (LRLGLPGSDE…DHNEDSVQPA (63 aa)) is disordered. Residues 43 to 52 (SSPELEESRC) show a composition bias toward basic and acidic residues. The segment covering 58–67 (SDSSDSTTTS) has biased composition (low complexity). The PB1 domain maps to 107–199 (GMYLKVSMAG…RIIKGSEAKG (93 aa)).

It belongs to the Aux/IAA family. As to quaternary structure, homodimers and heterodimers.

It localises to the nucleus. Aux/IAA proteins are short-lived transcriptional factors that function as repressors of early auxin response genes at low auxin concentrations. Repression is thought to result from the interaction with auxin response factors (ARFs), proteins that bind to the auxin-responsive promoter element (AuxRE). Formation of heterodimers with ARF proteins may alter their ability to modulate early auxin response genes expression. The protein is Auxin-induced protein 22E (AUX22E) of Vigna radiata var. radiata (Mung bean).